Consider the following 594-residue polypeptide: MESNHKSGDGLSGTQKEAALRALVQRTGYSLVQENGQRKYGGPPPGWDAAPPERGCEIFIGKLPRDLFEDELIPLCEKIGKIYEMRMMMDFNGNNRGYAFVTFSNKVEAKNAIKQLNNYEIRNGRLLGVCASVDNCRLFVGGIPKTKKREEILSEMKKVTEGVVDVIVYPSAADKTKNRGFAFVEYESHRAAAMARRKLLPGRIQLWGHGIAVDWAEPEVEVDEDTMSSVKILYVRNLMLSTSEEMIEKEFNNIKPGAVERVKKIRDYAFVHFSNREDAVEAMKALNGKVLDGSPIEVTLAKPVDKDSYVRYTRGTGGRGTMLQGEYTYSLGQVYDPTTTYLGAPVFYAPQTYAAIPSLHFPATKGHLSNRAIIRAPSVREIYMNVPVGAAGVRGLGGRGYLAYTGLGRGYQVKGDKREDKLYDILPGMELTPMNPVTLKPQGIKLAPQILEEICQKNNWGQPVYQLHSAIGQDQRQLFLYKITIPALASQNPAIHPFTPPKLSAFVDEAKTYAAEYTLQTLGIPTDGGDGTMATAAAAATAFPGYAVPNATAPVSAAQLKQAVTLGQDLAAYTTYEVYPTFAVTARGDGYGTF.

3 RRM domains span residues 56-134 (CEIF…ASVD), 136-218 (CRLF…WAEP), and 231-303 (KILY…LAKP). Residues 360–409 (HFPATKGHLSNRAIIRAPSVREIYMNVPVGAAGVRGLGGRGYLAYTGLGR) form a required for nuclear localization region. Position 499 is a phosphothreonine (T499).

Part of the apolipoprotein B mRNA editing complex with APOBEC1. Interacts with TNPO2; TNPO2 may be responsible for transport of A1CF into the nucleus. Interacts with SYNCRIP. Interacts with CELF2/CUGBP2. Interacts with RBM47. Widely expressed with highest levels in brain, liver, pancreas, colon and spleen.

It is found in the nucleus. The protein localises to the endoplasmic reticulum. Its subcellular location is the cytoplasm. Functionally, essential component of the apolipoprotein B mRNA editing enzyme complex which is responsible for the postranscriptional editing of a CAA codon for Gln to a UAA codon for stop in APOB mRNA. Binds to APOB mRNA and is probably responsible for docking the catalytic subunit, APOBEC1, to the mRNA to allow it to deaminate its target cytosine. The complex also protects the edited APOB mRNA from nonsense-mediated decay. This is APOBEC1 complementation factor (A1CF) from Homo sapiens (Human).